Consider the following 152-residue polypeptide: Probable flagellum biosynthesis repressor protein FlbT (152 aa).

This sequence belongs to the FlbT family.

Its function is as follows. Has a post-transcriptional repressor function in flagellum biogenesis. Associates with the 5'-UTR of fljK mRNA and promotes its degradation. The protein is Probable flagellum biosynthesis repressor protein FlbT of Brucella anthropi (strain ATCC 49188 / DSM 6882 / CCUG 24695 / JCM 21032 / LMG 3331 / NBRC 15819 / NCTC 12168 / Alc 37) (Ochrobactrum anthropi).